Here is a 522-residue protein sequence, read N- to C-terminus: Poly(A) polymerase (522 aa).

Residues 63–65, 76–78, Asp-130, Lys-193, Tyr-202, and 211–212 each bind ATP; these read YGS, DID, and GI. Mg(2+)-binding residues include Asp-76, Asp-78, and Asp-130. Residues 475-522 are disordered; the sequence is QLKAKEENSIPNEEKKEQLKKEMKQEANTIVKNSSTDDDFMKRFTRKN. Residues 476–499 show a composition bias toward basic and acidic residues; that stretch reads LKAKEENSIPNEEKKEQLKKEMKQ.

The protein belongs to the poly(A) polymerase family. It depends on Mg(2+) as a cofactor. The cofactor is Mn(2+).

The protein localises to the cytoplasm. Its subcellular location is the nucleus. The catalysed reaction is RNA(n) + ATP = RNA(n)-3'-adenine ribonucleotide + diphosphate. Polymerase that creates the 3'-poly(A) tail of mRNA's. May acquire specificity through interaction with a cleavage and polyadenylation factor. The chain is Poly(A) polymerase from Entamoeba histolytica (strain ATCC 30459 / HM-1:IMSS / ABRM).